The primary structure comprises 510 residues: NAD(P)H-quinone oxidoreductase subunit 2 B, chloroplastic (510 aa).

The next 13 helical transmembrane spans lie at 24 to 44 (LLLF…GLIL), 57 to 77 (ISWF…VLLF), 99 to 119 (IFQF…VEYI), 124 to 144 (MAIT…MFLC), 149 to 169 (LITI…LSGY), 183 to 203 (YLLM…WLYG), 227 to 247 (PGIS…LSLA), 295 to 315 (WHLL…LIAI), 323 to 343 (MLAY…IVGD), 354 to 374 (YMLF…SFGL), 395 to 415 (ALSL…AGFF), 418 to 438 (LYLF…IGLL), and 482 to 502 (LSMI…NPII).

Belongs to the complex I subunit 2 family. In terms of assembly, NDH is composed of at least 16 different subunits, 5 of which are encoded in the nucleus.

It is found in the plastid. The protein localises to the chloroplast thylakoid membrane. It carries out the reaction a plastoquinone + NADH + (n+1) H(+)(in) = a plastoquinol + NAD(+) + n H(+)(out). The enzyme catalyses a plastoquinone + NADPH + (n+1) H(+)(in) = a plastoquinol + NADP(+) + n H(+)(out). Functionally, NDH shuttles electrons from NAD(P)H:plastoquinone, via FMN and iron-sulfur (Fe-S) centers, to quinones in the photosynthetic chain and possibly in a chloroplast respiratory chain. The immediate electron acceptor for the enzyme in this species is believed to be plastoquinone. Couples the redox reaction to proton translocation, and thus conserves the redox energy in a proton gradient. This chain is NAD(P)H-quinone oxidoreductase subunit 2 B, chloroplastic, found in Lotus japonicus (Lotus corniculatus var. japonicus).